The sequence spans 894 residues: ABC-transporter-regulating transcription factor (894 aa).

Positions 71–98 (CDMCRKKKIKCDGKMPKCSHCINYRTDC) form a DNA-binding region, zn(2)-C6 fungal-type. Residues 159–174 (NTALNSLKSPTNKFNG) are compositionally biased toward polar residues. The tract at residues 159–219 (NTALNSLKSP…PKESETEVEG (61 aa)) is disordered. A compositionally biased stretch (low complexity) spans 175 to 189 (SSATSQSQHTTASRH). The segment covering 199-210 (SPHTAATSPNSP) has biased composition (polar residues). A helical membrane pass occupies residues 649-669 (CVWLILYYPVSALVTLFANIL). The tract at residues 724–797 (AEKESHSKKK…MSNPTRAFAP (74 aa)) is disordered. The segment covering 736–750 (AAPDEPQDLRQKTPD) has biased composition (basic and acidic residues). Composition is skewed to polar residues over residues 751–761 (ENSVPSPSTKR) and 771–792 (LFPSSSYPINLGNTGPDMSNPT).

The protein localises to the nucleus. It localises to the membrane. In terms of biological role, transcription factor that regulates expression of the genes related to resistance to azole compounds. The chain is ABC-transporter-regulating transcription factor from Aspergillus oryzae (strain ATCC 42149 / RIB 40) (Yellow koji mold).